A 115-amino-acid chain; its full sequence is Hydrogenase maturation factor HypA (115 aa).

Position 2 (histidine 2) interacts with Ni(2+). Zn(2+) contacts are provided by cysteine 74, cysteine 77, cysteine 90, and cysteine 93.

It belongs to the HypA/HybF family.

Involved in the maturation of [NiFe] hydrogenases. Required for nickel insertion into the metal center of the hydrogenase. The polypeptide is Hydrogenase maturation factor HypA (Desulfosudis oleivorans (strain DSM 6200 / JCM 39069 / Hxd3) (Desulfococcus oleovorans)).